A 694-amino-acid chain; its full sequence is Elongation factor G (694 aa).

In terms of domain architecture, tr-type G spans 8-282; it reads KDYRNIGIMA…AVIDYLPSPV (275 aa). Residues 17-24, 81-85, and 135-138 each bind GTP; these read AHIDAGKT, DTPGH, and NKMD.

Belongs to the TRAFAC class translation factor GTPase superfamily. Classic translation factor GTPase family. EF-G/EF-2 subfamily.

The protein resides in the cytoplasm. Catalyzes the GTP-dependent ribosomal translocation step during translation elongation. During this step, the ribosome changes from the pre-translocational (PRE) to the post-translocational (POST) state as the newly formed A-site-bound peptidyl-tRNA and P-site-bound deacylated tRNA move to the P and E sites, respectively. Catalyzes the coordinated movement of the two tRNA molecules, the mRNA and conformational changes in the ribosome. This chain is Elongation factor G, found in Mesomycoplasma hyopneumoniae (strain J / ATCC 25934 / NCTC 10110) (Mycoplasma hyopneumoniae).